We begin with the raw amino-acid sequence, 316 residues long: Olfactory receptor 2G6 (316 aa).

The Extracellular portion of the chain corresponds to 1 to 25 (MEETNNSSEKGFLLLGFSDQPQLER). Asn-5 and Asn-6 each carry an N-linked (GlcNAc...) asparagine glycan. Residues 26-49 (FLFAIILYFYVLSLLGNTALILVC) traverse the membrane as a helical segment. Residues 50-57 (CLDSRLHT) lie on the Cytoplasmic side of the membrane. The helical transmembrane segment at 58 to 79 (PMYFFLSNLSCVDICFTTSVAP) threads the bilayer. Topologically, residues 80 to 100 (QLLVTMNKKDKTMSYGGCVAQ) are extracellular. A disulfide bond links Cys-97 and Cys-189. A helical transmembrane segment spans residues 101-120 (LYVAMGLGSSECILLAVMAY). The Cytoplasmic portion of the chain corresponds to 121 to 139 (DRYAAVCRPLRYIAIMHPR). The chain crosses the membrane as a helical span at residues 140–158 (FCASLAGGAWLSGLITSLI). The Extracellular segment spans residues 159–195 (QCSLTVQLPLCGHRTLDHIFCEVPVLIKLACVDTTFN). Residues 196 to 219 (EAELFVASVVFLIVPVLLILVSYG) form a helical membrane-spanning segment. The Cytoplasmic portion of the chain corresponds to 220 to 236 (FITQAVLRIKSAAGRQK). A helical membrane pass occupies residues 237-259 (AFGTCSSHLVVVIIFYGTIIFMY). The Extracellular segment spans residues 260-272 (LQPANRRSKNQGK). Residues 273 to 292 (FVSLFYTIVTPLLNPIIYTL) form a helical membrane-spanning segment. Topologically, residues 293-316 (RNKDVKGALRTLILGSAAGQSHKD) are cytoplasmic.

The protein belongs to the G-protein coupled receptor 1 family.

Its subcellular location is the cell membrane. Odorant receptor. This is Olfactory receptor 2G6 (OR2G6) from Homo sapiens (Human).